Reading from the N-terminus, the 208-residue chain is Large ribosomal subunit protein bL25 (208 aa).

Positions 1 to 20 are disordered; the sequence is MANHQIKAQRRKDEGKGASR.

This sequence belongs to the bacterial ribosomal protein bL25 family. CTC subfamily. Part of the 50S ribosomal subunit; part of the 5S rRNA/L5/L18/L25 subcomplex. Contacts the 5S rRNA. Binds to the 5S rRNA independently of L5 and L18.

Functionally, this is one of the proteins that binds to the 5S RNA in the ribosome where it forms part of the central protuberance. This chain is Large ribosomal subunit protein bL25, found in Xylella fastidiosa (strain 9a5c).